A 363-amino-acid chain; its full sequence is Palmitoyltransferase ZDHHC9 (363 aa).

Residues 1–35 (MSVMVVRKKVTRKWEKLPGRNTFCCDGRVMMARQK) lie on the Cytoplasmic side of the membrane. A helical membrane pass occupies residues 36-56 (GIFYLTLFLILGTCTLFFAFE). Residues 57-63 (CRYLAVQ) lie on the Lumenal side of the membrane. Residues 64–84 (LSPAIPVFAAMLFLFSMATLL) form a helical membrane-spanning segment. Topologically, residues 85–183 (RTSFSDPGVI…NCVGKRNYRY (99 aa)) are cytoplasmic. Residues 139–189 (KYCYTCKIFRPPRASHCSICDNCVERFDHHCPWVGNCVGKRNYRYFYLFIL) enclose the DHHC domain. The active-site S-palmitoyl cysteine intermediate is cysteine 169. Residues 184-204 (FYLFILSLSLLTIYVFAFNIV) traverse the membrane as a helical segment. The Lumenal portion of the chain corresponds to 205–228 (YVALKSLKIGFLETLKETPGTVLE). Residues 229-249 (VLICFFTLWSVVGLTGFHTFL) traverse the membrane as a helical segment. At 250 to 363 (VALNQTTNED…PPQEVTEAEK (114 aa)) the chain is on the cytoplasmic side. The tract at residues 303–363 (PLEESGSRPP…PPQEVTEAEK (61 aa)) is disordered. A compositionally biased stretch (polar residues) spans 310–322 (RPPSTQEASTSLL). Pro residues predominate over residues 345–355 (EMPPPEPPEPP).

Belongs to the DHHC palmitoyltransferase family. ERF2/ZDHHC9 subfamily. Interacts with GOLGA7.

It localises to the endoplasmic reticulum membrane. The protein localises to the golgi apparatus membrane. It carries out the reaction L-cysteinyl-[protein] + hexadecanoyl-CoA = S-hexadecanoyl-L-cysteinyl-[protein] + CoA. In terms of biological role, palmitoyltransferase that catalyzes the addition of palmitate onto various protein substrates, such as ADRB2, GSDMD, HRAS, NRAS and CGAS. The ZDHHC9-GOLGA7 complex is a palmitoyltransferase specific for HRAS and NRAS. May have a palmitoyltransferase activity toward the beta-2 adrenergic receptor/ADRB2 and therefore regulate G protein-coupled receptor signaling. Acts as a regulator of innate immunity by catalyzing palmitoylation of CGAS, thereby promoting CGAS homodimerization and cyclic GMP-AMP synthase activity. Activates pyroptosis by catalyzing palmitoylation of gasdermin-D (GSDMD), thereby promoting membrane translocation and pore formation of GSDMD. The protein is Palmitoyltransferase ZDHHC9 (ZDHHC9) of Bos taurus (Bovine).